Here is a 519-residue protein sequence, read N- to C-terminus: Ribose import ATP-binding protein RbsA 2 (519 aa).

ABC transporter domains are found at residues 15 to 252 (FRLR…VGRP) and 262 to 506 (HEPG…TGVR). Residue 47–54 (GENGAGKS) coordinates ATP.

It belongs to the ABC transporter superfamily. Ribose importer (TC 3.A.1.2.1) family. The complex is composed of an ATP-binding protein (RbsA), two transmembrane proteins (RbsC) and a solute-binding protein (RbsB).

The protein resides in the cell membrane. It catalyses the reaction D-ribose(out) + ATP + H2O = D-ribose(in) + ADP + phosphate + H(+). Its function is as follows. Part of the ABC transporter complex RbsABC involved in ribose import. Responsible for energy coupling to the transport system. The polypeptide is Ribose import ATP-binding protein RbsA 2 (Rubrobacter xylanophilus (strain DSM 9941 / JCM 11954 / NBRC 16129 / PRD-1)).